A 396-amino-acid chain; its full sequence is Pectate lyase 5 (396 aa).

Residues 1 to 25 form the signal peptide; that stretch reads MGIKHCCYILYFTLALVTLLQPVRS. N36 carries N-linked (GlcNAc...) asparagine glycosylation. A disulfide bond links C53 and C70. Ca(2+)-binding residues include D193, D217, and D221. R273 is an active-site residue.

It belongs to the polysaccharide lyase 1 family. Amb a subfamily. In terms of assembly, monomer. It depends on Ca(2+) as a cofactor. The N-terminus is blocked. As to expression, pollen and flowers.

The enzyme catalyses Eliminative cleavage of (1-&gt;4)-alpha-D-galacturonan to give oligosaccharides with 4-deoxy-alpha-D-galact-4-enuronosyl groups at their non-reducing ends.. The protein operates within glycan metabolism; pectin degradation; 2-dehydro-3-deoxy-D-gluconate from pectin: step 2/5. In terms of biological role, has pectate lyase activity. This chain is Pectate lyase 5, found in Ambrosia artemisiifolia (Common ragweed).